The chain runs to 395 residues: Dihydroorotate dehydrogenase (quinone), mitochondrial (395 aa).

A mitochondrion; not cleaved-targeting transit peptide spans 1–10 (MAWRQLKKRA). The Mitochondrial matrix portion of the chain corresponds to 1–10 (MAWRQLKKRA). The chain crosses the membrane as a helical span at residues 11-30 (QDAMVILGGGGLLFASYLTA). Residues 31–395 (TGDEHFYAEL…TDAIGADHRR (365 aa)) lie on the Mitochondrial intermembrane side of the membrane. FMN contacts are provided by residues 95 to 99 (AGFDK) and serine 119. Residue lysine 99 participates in substrate binding. 144 to 148 (NRYGF) is a substrate binding site. Residues asparagine 180 and asparagine 211 each coordinate FMN. 211–216 (NVSSPN) provides a ligand contact to substrate. Serine 214 acts as the Nucleophile in catalysis. Lysine 254 and threonine 282 together coordinate FMN. 283–284 (NS) is a binding site for substrate. FMN-binding positions include glycine 305, glycine 334, and 355 to 356 (YT).

The protein belongs to the dihydroorotate dehydrogenase family. Type 2 subfamily. As to quaternary structure, monomer. Requires FMN as cofactor. In terms of processing, the uncleaved transit peptide is required for mitochondrial targeting and proper membrane integration.

It localises to the mitochondrion inner membrane. It catalyses the reaction (S)-dihydroorotate + a quinone = orotate + a quinol. The protein operates within pyrimidine metabolism; UMP biosynthesis via de novo pathway; orotate from (S)-dihydroorotate (quinone route): step 1/1. Catalyzes the conversion of dihydroorotate to orotate with quinone as electron acceptor. Required for UMP biosynthesis via de novo pathway. This is Dihydroorotate dehydrogenase (quinone), mitochondrial (DHODH) from Bos taurus (Bovine).